Consider the following 375-residue polypeptide: Succinyl-diaminopimelate desuccinylase (375 aa).

His66 is a binding site for Zn(2+). Residue Asp68 is part of the active site. Position 99 (Asp99) interacts with Zn(2+). Glu133 acts as the Proton acceptor in catalysis. Zn(2+) contacts are provided by Glu134, Glu162, and His348.

The protein belongs to the peptidase M20A family. DapE subfamily. Homodimer. The cofactor is Zn(2+). Co(2+) is required as a cofactor.

The enzyme catalyses N-succinyl-(2S,6S)-2,6-diaminopimelate + H2O = (2S,6S)-2,6-diaminopimelate + succinate. It functions in the pathway amino-acid biosynthesis; L-lysine biosynthesis via DAP pathway; LL-2,6-diaminopimelate from (S)-tetrahydrodipicolinate (succinylase route): step 3/3. Catalyzes the hydrolysis of N-succinyl-L,L-diaminopimelic acid (SDAP), forming succinate and LL-2,6-diaminopimelate (DAP), an intermediate involved in the bacterial biosynthesis of lysine and meso-diaminopimelic acid, an essential component of bacterial cell walls. The chain is Succinyl-diaminopimelate desuccinylase from Cronobacter sakazakii (strain ATCC BAA-894) (Enterobacter sakazakii).